The following is a 259-amino-acid chain: Leucine-rich repeat-containing protein 61 (259 aa).

4 LRR repeats span residues 32 to 53 (SILL…GECL), 54 to 75 (GLEW…ASLR), 76 to 97 (QLAV…ATCE), and 98 to 119 (NLQS…QCLA). In terms of domain architecture, LRRCT spans 138-178 (NPLCANPSYWAAVRELLPGLKVIDGERVIGRGSEFYQLCRD).

This chain is Leucine-rich repeat-containing protein 61 (LRRC61), found in Homo sapiens (Human).